Here is a 360-residue protein sequence, read N- to C-terminus: Alpha-ketoglutarate dependent kainoid synthase (360 aa).

The Fe2OG dioxygenase domain occupies 200-310; the sequence is MFFSNRIYPE…RASLISFYEP (111 aa). Fe cation is bound by residues H225, D227, and H286. A 2-oxoglutarate-binding site is contributed by R301.

Belongs to the iron/ascorbate-dependent oxidoreductase family. Fe(2+) serves as cofactor.

It carries out the reaction prekainate + 2-oxoglutarate + O2 = kainate + succinate + CO2 + H2O. It catalyses the reaction prekainate + 2-oxoglutarate + O2 + H(+) = kainate lactone + succinate + CO2 + H2O. Its pathway is secondary metabolite biosynthesis. Inhibited by the iron chelator EDTA. Its function is as follows. Iron/ascorbate-dependent oxidoreductase: part of the gene cluster that mediates the biosynthesis of kainic acid (KA) and derivatives, natural products with neurochemical activity acting as ionotropic glutamate receptor (iGluR) agonists, thus being neurotoxins. Catalyzes the conversion of prekainic acid to kainic acid and kainic acid lactone. The chain is Alpha-ketoglutarate dependent kainoid synthase from Digenea simplex (Marine red alga).